The chain runs to 181 residues: Translation initiation factor IF-3, chloroplastic (181 aa).

The protein belongs to the IF-3 family. Monomer.

It localises to the plastid. The protein resides in the chloroplast. IF-3 binds to the 30S ribosomal subunit and shifts the equilibrium between 70S ribosomes and their 50S and 30S subunits in favor of the free subunits, thus enhancing the availability of 30S subunits on which protein synthesis initiation begins. The sequence is that of Translation initiation factor IF-3, chloroplastic from Gracilaria tenuistipitata var. liui (Red alga).